The primary structure comprises 763 residues: Transferrin receptor protein 1 (763 aa).

The Cytoplasmic segment spans residues 1-67 (MMDQARSAFS…KPKRFNGRLC (67 aa)). The interval 1–67 (MMDQARSAFS…KPKRFNGRLC (67 aa)) is mediates interaction with SH3BP4. Phosphoserine is present on residues Ser10 and Ser19. Phosphotyrosine is present on Tyr20. An Endocytosis signal motif is present at residues 20-23 (YTRF). Thr21 bears the Phosphothreonine mark. Phosphoserine is present on Ser24. The short motif at 58–61 (KPKR) is the Stop-transfer sequence element. Cys67 carries the S-palmitoyl cysteine lipid modification. A helical; Signal-anchor for type II membrane protein membrane pass occupies residues 68–88 (FAAIALVIFFLIGFMSGYLGY). Residues 89–763 (CKRVEQKEEC…GDIWNIDNEF (675 aa)) are Extracellular-facing. Thr104 is a glycosylation site (O-linked (GalNAc...) threonine). Residues 225–315 (SKPTEVSGKL…GTGDPYTPGF (91 aa)) enclose the PA domain. N-linked (GlcNAc...) asparagine glycosylation is found at Asn253 and Asn319. The segment at 572-763 (RLDTYEALTQ…GDIWNIDNEF (192 aa)) is ligand-binding. The short motif at 649-651 (RGD) is the Cell attachment site element. 2 N-linked (GlcNAc...) asparagine glycosylation sites follow: Asn725 and Asn730.

Belongs to the peptidase M28 family. M28B subfamily. In terms of assembly, homodimer; disulfide-linked. Binds one transferrin molecule per subunit. Interacts with SH3BP4. Interacts with STEAP3; facilitates TFRC endocytosis in erythroid precursor cells. Stearoylated by ZDHHC6 which inhibits TFRC-mediated activation of the JNK pathway and promotes mitochondrial fragmentation. Stearoylation does not affect iron uptake. In terms of processing, N- and O-glycosylated, phosphorylated and palmitoylated.

It is found in the cell membrane. Its subcellular location is the melanosome. In terms of biological role, cellular uptake of iron occurs via receptor-mediated endocytosis of ligand-occupied transferrin receptor into specialized endosomes. Endosomal acidification leads to iron release. The apotransferrin-receptor complex is then recycled to the cell surface with a return to neutral pH and the concomitant loss of affinity of apotransferrin for its receptor. Transferrin receptor is necessary for development of erythrocytes and the nervous system. Upon stimulation, positively regulates T and B cell proliferation through iron uptake. Acts as a lipid sensor that regulates mitochondrial fusion by regulating activation of the JNK pathway. When dietary levels of stearate (C18:0) are low, promotes activation of the JNK pathway, resulting in HUWE1-mediated ubiquitination and subsequent degradation of the mitofusin MFN2 and inhibition of mitochondrial fusion. When dietary levels of stearate (C18:0) are high, TFRC stearoylation inhibits activation of the JNK pathway and thus degradation of the mitofusin MFN2. Mediates uptake of NICOL1 into fibroblasts where it may regulate extracellular matrix production. The chain is Transferrin receptor protein 1 (Tfrc) from Mus musculus (Mouse).